The chain runs to 371 residues: Peptide chain release factor 2 (371 aa).

At glutamine 253 the chain carries N5-methylglutamine.

It belongs to the prokaryotic/mitochondrial release factor family. Methylated by PrmC. Methylation increases the termination efficiency of RF2.

It localises to the cytoplasm. Peptide chain release factor 2 directs the termination of translation in response to the peptide chain termination codons UGA and UAA. The chain is Peptide chain release factor 2 from Mycobacterium sp. (strain KMS).